A 370-amino-acid polypeptide reads, in one-letter code: Cobalt-precorrin-5B C(1)-methyltransferase (370 aa).

The protein belongs to the CbiD family.

The enzyme catalyses Co-precorrin-5B + S-adenosyl-L-methionine = Co-precorrin-6A + S-adenosyl-L-homocysteine. The protein operates within cofactor biosynthesis; adenosylcobalamin biosynthesis; cob(II)yrinate a,c-diamide from sirohydrochlorin (anaerobic route): step 6/10. In terms of biological role, catalyzes the methylation of C-1 in cobalt-precorrin-5B to form cobalt-precorrin-6A. In Prochlorococcus marinus (strain MIT 9312), this protein is Cobalt-precorrin-5B C(1)-methyltransferase.